A 406-amino-acid chain; its full sequence is Imidazolonepropionase (406 aa).

Fe(3+) contacts are provided by H75 and H77. Residues H75 and H77 each coordinate Zn(2+). 3 residues coordinate 4-imidazolone-5-propanoate: R84, Y147, and H180. Y147 serves as a coordination point for N-formimidoyl-L-glutamate. Residue H245 coordinates Fe(3+). H245 serves as a coordination point for Zn(2+). Residue Q248 coordinates 4-imidazolone-5-propanoate. Position 320 (D320) interacts with Fe(3+). D320 serves as a coordination point for Zn(2+). Positions 322 and 324 each coordinate N-formimidoyl-L-glutamate. Position 325 (T325) interacts with 4-imidazolone-5-propanoate.

Belongs to the metallo-dependent hydrolases superfamily. HutI family. The cofactor is Zn(2+). Fe(3+) is required as a cofactor.

The protein localises to the cytoplasm. It catalyses the reaction 4-imidazolone-5-propanoate + H2O = N-formimidoyl-L-glutamate. It participates in amino-acid degradation; L-histidine degradation into L-glutamate; N-formimidoyl-L-glutamate from L-histidine: step 3/3. In terms of biological role, catalyzes the hydrolytic cleavage of the carbon-nitrogen bond in imidazolone-5-propanoate to yield N-formimidoyl-L-glutamate. It is the third step in the universal histidine degradation pathway. This is Imidazolonepropionase from Hyphomonas neptunium (strain ATCC 15444).